A 473-amino-acid polypeptide reads, in one-letter code: Photosystem II CP43 reaction center protein (473 aa).

Residues 1–14 (MKTLYSLRRFYHVE) constitute a propeptide that is removed on maturation. Thr-15 carries the post-translational modification N-acetylthreonine. Thr-15 carries the phosphothreonine modification. The next 5 membrane-spanning stretches (helical) occupy residues 69 to 93 (LFEV…PHLA), 134 to 155 (LLGP…KDRN), 178 to 200 (KASY…RKIT), 255 to 275 (KPFA…LSYS), and 291 to 312 (WFNN…ASQA). Glu-367 lines the [CaMn4O5] cluster pocket. Residues 447–471 (RARAAAAGFEKGIDRDFEPVLSMTP) form a helical membrane-spanning segment.

This sequence belongs to the PsbB/PsbC family. PsbC subfamily. As to quaternary structure, PSII is composed of 1 copy each of membrane proteins PsbA, PsbB, PsbC, PsbD, PsbE, PsbF, PsbH, PsbI, PsbJ, PsbK, PsbL, PsbM, PsbT, PsbX, PsbY, PsbZ, Psb30/Ycf12, at least 3 peripheral proteins of the oxygen-evolving complex and a large number of cofactors. It forms dimeric complexes. Binds multiple chlorophylls and provides some of the ligands for the Ca-4Mn-5O cluster of the oxygen-evolving complex. It may also provide a ligand for a Cl- that is required for oxygen evolution. PSII binds additional chlorophylls, carotenoids and specific lipids. is required as a cofactor.

The protein resides in the plastid. It is found in the chloroplast thylakoid membrane. Functionally, one of the components of the core complex of photosystem II (PSII). It binds chlorophyll and helps catalyze the primary light-induced photochemical processes of PSII. PSII is a light-driven water:plastoquinone oxidoreductase, using light energy to abstract electrons from H(2)O, generating O(2) and a proton gradient subsequently used for ATP formation. The sequence is that of Photosystem II CP43 reaction center protein from Cicer arietinum (Chickpea).